The chain runs to 413 residues: Putative competence-damage inducible protein (413 aa).

This sequence belongs to the CinA family.

The polypeptide is Putative competence-damage inducible protein (Lacticaseibacillus paracasei (strain ATCC 334 / BCRC 17002 / CCUG 31169 / CIP 107868 / KCTC 3260 / NRRL B-441) (Lactobacillus paracasei)).